The chain runs to 149 residues: Large ribosomal subunit protein uL13 (149 aa).

It belongs to the universal ribosomal protein uL13 family. Part of the 50S ribosomal subunit.

In terms of biological role, this protein is one of the early assembly proteins of the 50S ribosomal subunit, although it is not seen to bind rRNA by itself. It is important during the early stages of 50S assembly. In Borrelia hermsii (strain HS1 / DAH), this protein is Large ribosomal subunit protein uL13.